We begin with the raw amino-acid sequence, 140 residues long: Alkaline proteinase inhibitor (140 aa).

An N-terminal signal peptide occupies residues 1–25; the sequence is MPSSVQATAGLLATLMMFCGEVAMA.

This sequence belongs to the protease inhibitor I38 family.

Its subcellular location is the periplasm. In terms of biological role, inhibitor of the alkaline protease. This is Alkaline proteinase inhibitor (inh) from Pseudomonas brassicacearum (strain NFM421).